A 190-amino-acid chain; its full sequence is Holliday junction branch migration complex subunit RuvA (190 aa).

A domain I region spans residues 1–63; it reads MLDFIKGKVI…EESIEIYGFL (63 aa). Residues 64–139 are domain II; the sequence is ESSERDLFEE…ILPSLQYEKD (76 aa). Position 139 (D139) is a region of interest, flexible linker. Residues 139 to 190 are domain III; sequence DQKYDDILSALLNLGYKRLEAKEVLDKIYNNEKDEATIIRESLSILAGKDGK.

Belongs to the RuvA family. As to quaternary structure, homotetramer. Forms an RuvA(8)-RuvB(12)-Holliday junction (HJ) complex. HJ DNA is sandwiched between 2 RuvA tetramers; dsDNA enters through RuvA and exits via RuvB. An RuvB hexamer assembles on each DNA strand where it exits the tetramer. Each RuvB hexamer is contacted by two RuvA subunits (via domain III) on 2 adjacent RuvB subunits; this complex drives branch migration. In the full resolvosome a probable DNA-RuvA(4)-RuvB(12)-RuvC(2) complex forms which resolves the HJ.

The protein localises to the cytoplasm. In terms of biological role, the RuvA-RuvB-RuvC complex processes Holliday junction (HJ) DNA during genetic recombination and DNA repair, while the RuvA-RuvB complex plays an important role in the rescue of blocked DNA replication forks via replication fork reversal (RFR). RuvA specifically binds to HJ cruciform DNA, conferring on it an open structure. The RuvB hexamer acts as an ATP-dependent pump, pulling dsDNA into and through the RuvAB complex. HJ branch migration allows RuvC to scan DNA until it finds its consensus sequence, where it cleaves and resolves the cruciform DNA. The chain is Holliday junction branch migration complex subunit RuvA from Thermodesulfovibrio yellowstonii (strain ATCC 51303 / DSM 11347 / YP87).